The primary structure comprises 2439 residues: Protein roller-3 (2439 aa).

An N-terminal signal peptide occupies residues 1–26; sequence MLDFPRFSLFLFLLFSSFLFSSFVHA. At 27 to 1851 the chain is on the extracellular side; the sequence is ATVFSSSLKT…EEEKGGILPY (1825 aa). N-linked (GlcNAc...) asparagine glycosylation is found at Asn64, Asn182, Asn334, Asn394, Asn496, Asn533, Asn657, Asn766, Asn868, Asn1003, Asn1036, Asn1090, and Asn1261. The region spanning 618 to 720 is the Fibronectin type-III 1 domain; the sequence is KPRIVAVSSI…STSNTALPDL (103 aa). Fibronectin type-III domains are found at residues 1403-1503, 1507-1628, 1629-1732, and 1738-1843; these read SKGI…TGFG, APRD…TLDV, PGTL…IQQA, and VPTA…EKEE. N-linked (GlcNAc...) asparagine glycosylation is found at Asn1567, Asn1636, Asn1677, and Asn1779. Residues 1852–1872 traverse the membrane as a helical segment; that stretch reads FLGISIILLLAAMILVGCFWL. The Cytoplasmic segment spans residues 1873–2439; the sequence is KSRRRQQMKK…GGTCRSVSQV (567 aa). Positions 1928-2199 constitute a Protein kinase domain; that stretch reads VEIVRHISDC…ATILKIFETC (272 aa). Residues 1934-1942 and Lys1963 each bind ATP; that span reads ISDCSYGSV. 3 disordered regions span residues 2214–2277, 2315–2348, and 2412–2439; these read NEGS…RPAT, SQRP…NRTN, and HLRA…VSQV. Polar residues-rich tracts occupy residues 2216-2233, 2334-2347, and 2420-2439; these read GSDN…SSRE, ATSS…SNRT, and PPTR…VSQV.

It is found in the membrane. Involved in larval development and locomotion. This Caenorhabditis briggsae protein is Protein roller-3.